The primary structure comprises 957 residues: Calsyntenin-3 (957 aa).

The first 19 residues, 1-19, serve as a signal peptide directing secretion; that stretch reads MTLLLVSLLLASLLQISSG. The Cytoplasmic segment spans residues 1-21; sequence MTLLLVSLLLASLLQISSGNK. Topologically, residues 20–848 are extracellular; that stretch reads NKANKHKPWI…SHRNSMVPSA (829 aa). The segment at residues 22 to 42 is an intramembrane region (helical); sequence ANKHKPWIEAEYQGIVMENDN. 2 consecutive Cadherin domains span residues 29-145 and 146-246; these read IEAE…APVF and VERL…KPSW. The Cytoplasmic portion of the chain corresponds to 43 to 73; it reads TVLLNPPLFALDKDAPLRYAGEICGFRLHGS. An intramembrane region (helical) is located at residues 74-94; it reads GVPFKAVILDKATGEGLIRAK. Over 95–139 the chain is Cytoplasmic; it reads EPVDCEAQKEHTFTTQAYDCVDGPDGANTKKSHKATVHVRVNDVN. The segment at residues 140–160 is an intramembrane region (helical); sequence EFAPVFVERLYRAAVTEGKLY. Topologically, residues 161-248 are cytoplasmic; it reads DRILRVEAID…KPTCKPSWQG (88 aa). The helical transmembrane segment at 249–269 threads the bilayer; sequence WNKRIEYAPGAGSLALFPGIR. The Lumenal segment spans residues 270–357; sequence LETCDEPLWN…GTQAVQVPLG (88 aa). Residues asparagine 299, asparagine 327, asparagine 347, asparagine 508, and asparagine 741 are each glycosylated (N-linked (GlcNAc...) asparagine). Residues 849–869 traverse the membrane as a helical segment; the sequence is ATLIIVVCVGFLVLMVILGLV. At 870–957 the chain is on the cytoplasmic side; the sequence is RIHSLHRRVS…RIIESPPHRY (88 aa). The disordered stretch occupies residues 916–957; that stretch reads QQTGVAGVAGGQQEEEDSSDSEAADSPSSDERRIIESPPHRY. Residues 928–938 are compositionally biased toward acidic residues; sequence QEEEDSSDSEA. Residues 944–957 are compositionally biased toward basic and acidic residues; sequence SDERRIIESPPHRY.

The protein belongs to the calsyntenin family. Interacts (via cadherin domains) with both alpha and beta isoforms of neurexins (NRXN1, NRXN2 and NRXN3). Directly interacts with APBA2. Forms a tripartite complex with APBA2 and APP. Interacts with low affinity with KLC1. Interacts with SLC23A2/SVCT2. In terms of assembly, interacts with CIDEA; inhibiting the lipid transferase activity of CIDEA. Interacts with CIDEC; inhibiting the lipid transferase activity of CIDEC. In terms of processing, proteolytically processed under normal cellular conditions. A primary zeta-cleavage generates a large extracellular (soluble) N-terminal domain (sAlc) and a short C-terminal transmembrane fragment (CTF1). A secondary cleavage catalyzed by gamma-secretase within the transmembrane domain releases the beta-Alc-beta chain in the extracellular milieu and produces an intracellular fragment (AlcICD). This processing is strongly suppressed in the tripartite complex formed with APBA2 and APP, which seems to prevent the association with gamma-secretase. Ubiquitinated: endoplasmic reticulum-localized protein is ubiquitinated and degraded by the endoplasmic reticulum-associated degradation (ERAD) pathway.

Its subcellular location is the postsynaptic cell membrane. The protein resides in the endoplasmic reticulum membrane. It localises to the golgi apparatus membrane. It is found in the cell projection. The protein localises to the dendrite. Its subcellular location is the lipid droplet. In terms of biological role, postsynaptic adhesion molecule that binds to presynaptic neurexins to mediate both excitatory and inhibitory synapse formation. Promotes synapse development by acting as a cell adhesion molecule at the postsynaptic membrane, which associates with both neurexin-alpha and neurexin-beta proteins at the presynaptic membrane. Regulates the balance between excitatory and inhibitory synapses by inhibiting formation of excitatory parallel-fiber synapses and promoting formation of inhibitory synapses in the same neuron. May also be involved in ascorbate (vitamin C) uptake via its interaction with SLC23A2/SVCT2. Complex formation with APBA2 and APP, stabilizes APP metabolism and enhances APBA2-mediated suppression of beta-APP40 secretion, due to the retardation of intracellular APP maturation. Functionally, adipose-specific isoform that plays a key role in adaptive thermogenesis. Facilitates the efficient use of stored triglyceride by promoting multilocular morphology of thermogenic adipocytes: acts by inhibiting the activity of CIDEA and CIDEC on lipid droplets, thereby preventing lipid droplet fusion and facilitating lipid utilization. May also participate in adaptive thermogenesis by promoting sympathetic innervation of thermogenic adipose tissue: acts by driving secretion of neurotrophic factor S100B from brown adipocytes, stimulating neurite outgrowth from sympathetic neurons. This chain is Calsyntenin-3, found in Rattus norvegicus (Rat).